A 129-amino-acid polypeptide reads, in one-letter code: Small ribosomal subunit protein uS8c (129 aa).

Belongs to the universal ribosomal protein uS8 family. In terms of assembly, part of the 30S ribosomal subunit.

The protein resides in the plastid. It localises to the chloroplast. One of the primary rRNA binding proteins, it binds directly to 16S rRNA central domain where it helps coordinate assembly of the platform of the 30S subunit. The chain is Small ribosomal subunit protein uS8c (rps8) from Oltmannsiellopsis viridis (Marine flagellate).